The sequence spans 334 residues: Sensor protein BceS (334 aa).

Residues 1–12 lie on the Cytoplasmic side of the membrane; that stretch reads MIKAFLIERRSW. The chain crosses the membrane as a helical span at residues 13–33; sequence IAAFLFQQALMLFIAFVDPSI. Ser-34 is a topological domain (extracellular). A helical transmembrane segment spans residues 35 to 55; the sequence is FGNVLYMVYLCILFFIIFLWF. The Cytoplasmic portion of the chain corresponds to 56 to 334; that stretch reads RYRKETAFYK…RNQFEHVISV (279 aa). Residues 121 to 326 enclose the Histidine kinase domain; it reads AWIHEVKTPL…VFTLTFPIRN (206 aa). The residue at position 124 (His-124) is a Phosphohistidine; by autocatalysis.

The protein resides in the cell membrane. The enzyme catalyses ATP + protein L-histidine = ADP + protein N-phospho-L-histidine.. Member of the two-component regulatory system BceS/BceR involved in the regulation of bacitracin resistance. Activates BceR in response to extracellular bacitracin. This Bacillus subtilis (strain 168) protein is Sensor protein BceS (bceS).